A 540-amino-acid chain; its full sequence is Chaperonin GroEL (540 aa).

ATP-binding positions include 29 to 32 (TLGP), 86 to 90 (DGTTT), Gly413, 477 to 479 (DAL), and Asp493.

The protein belongs to the chaperonin (HSP60) family. As to quaternary structure, forms a cylinder of 14 subunits composed of two heptameric rings stacked back-to-back. Interacts with the co-chaperonin GroES.

It is found in the cytoplasm. It carries out the reaction ATP + H2O + a folded polypeptide = ADP + phosphate + an unfolded polypeptide.. In terms of biological role, together with its co-chaperonin GroES, plays an essential role in assisting protein folding. The GroEL-GroES system forms a nano-cage that allows encapsulation of the non-native substrate proteins and provides a physical environment optimized to promote and accelerate protein folding. This is Chaperonin GroEL from Clostridium botulinum (strain Alaska E43 / Type E3).